The primary structure comprises 688 residues: NADH-ubiquinone oxidoreductase 75 kDa subunit (688 aa).

A 2Fe-2S ferredoxin-type domain is found at 1–85 (MLIRFKINEI…DESIETEIDE (85 aa)). 4 residues coordinate [2Fe-2S] cluster: C38, C49, C52, and C66. A 4Fe-4S His(Cys)3-ligated-type domain is found at 85–124 (EILKAREGVMEFLLINHPLDCPICDQGGECDLQEQTIAYG). [4Fe-4S] cluster contacts are provided by H101, C105, C108, C114, C153, C156, C159, and C204. A 4Fe-4S Mo/W bis-MGD-type domain is found at 223–279 (LKNIKGIDIFDTVLTPINYQVKGGEIFRILPRINDRLNEEWITDKVRFHYESYKIIE).

This sequence belongs to the complex I 75 kDa subunit family. As to quaternary structure, complex I is composed of about 45 different subunits. It depends on [2Fe-2S] cluster as a cofactor. The cofactor is [4Fe-4S] cluster.

The protein resides in the mitochondrion inner membrane. It catalyses the reaction a ubiquinone + NADH + 5 H(+)(in) = a ubiquinol + NAD(+) + 4 H(+)(out). Core subunit of the mitochondrial membrane respiratory chain NADH dehydrogenase (Complex I) that is believed to belong to the minimal assembly required for catalysis. Complex I functions in the transfer of electrons from NADH to the respiratory chain. The immediate electron acceptor for the enzyme is believed to be ubiquinone. This is the largest subunit of complex I and it is a component of the iron-sulfur (IP) fragment of the enzyme. It may form part of the active site crevice where NADH is oxidized. This Dictyostelium citrinum (Slime mold) protein is NADH-ubiquinone oxidoreductase 75 kDa subunit (nad11).